Consider the following 261-residue polypeptide: Pimeloyl-[acyl-carrier protein] methyl ester esterase (261 aa).

One can recognise an AB hydrolase-1 domain in the interval 15 to 243 (HLVLLHGWGL…AAHAPFISHP (229 aa)). Residues tryptophan 22, 83–84 (SL), and 144–148 (FLALQ) contribute to the substrate site. Catalysis depends on serine 83, which acts as the Nucleophile. Catalysis depends on residues aspartate 208 and histidine 236. A substrate-binding site is contributed by histidine 236.

This sequence belongs to the AB hydrolase superfamily. Carboxylesterase BioH family. As to quaternary structure, monomer.

It localises to the cytoplasm. It carries out the reaction 6-carboxyhexanoyl-[ACP] methyl ester + H2O = 6-carboxyhexanoyl-[ACP] + methanol + H(+). The protein operates within cofactor biosynthesis; biotin biosynthesis. Its function is as follows. The physiological role of BioH is to remove the methyl group introduced by BioC when the pimeloyl moiety is complete. It allows to synthesize pimeloyl-ACP via the fatty acid synthetic pathway through the hydrolysis of the ester bonds of pimeloyl-ACP esters. The chain is Pimeloyl-[acyl-carrier protein] methyl ester esterase from Proteus mirabilis (strain HI4320).